We begin with the raw amino-acid sequence, 45 residues long: Photosystem II reaction center protein K (45 aa).

Positions 1–8 (MEAALLLA) are excised as a propeptide. The chain crosses the membrane as a helical span at residues 24-44 (LPIIPVFFLLLAFVWQAAVGF).

This sequence belongs to the PsbK family. As to quaternary structure, PSII is composed of 1 copy each of membrane proteins PsbA, PsbB, PsbC, PsbD, PsbE, PsbF, PsbH, PsbI, PsbJ, PsbK, PsbL, PsbM, PsbT, PsbX, PsbY, PsbZ, Psb30/Ycf12, peripheral proteins PsbO, CyanoQ (PsbQ), PsbU, PsbV and a large number of cofactors. It forms dimeric complexes.

The protein resides in the cellular thylakoid membrane. In terms of biological role, one of the components of the core complex of photosystem II (PSII). PSII is a light-driven water:plastoquinone oxidoreductase that uses light energy to abstract electrons from H(2)O, generating O(2) and a proton gradient subsequently used for ATP formation. It consists of a core antenna complex that captures photons, and an electron transfer chain that converts photonic excitation into a charge separation. In Nostoc sp. (strain PCC 7120 / SAG 25.82 / UTEX 2576), this protein is Photosystem II reaction center protein K.